We begin with the raw amino-acid sequence, 256 residues long: MVKSHIGSWILVLFVAMWSDVGLCKKRPKPGGGWNTGGSRYPGQGSPGGNRYPPQGGGGWGQPHGGGWGQPHGGGWGQPHGGGWGQPHGGGGWGQGGSHSQWNKPSKPKTNMKHVAGAAAAGAVVGGLGGYMLGSAMSRPLIHFGNDYEDRYYRENMYRYPNQVYYRPVDQYSNQNNFVHDCVNITVKQHTVTTTTKGENFTETDIKIMERVVEQMCITQYQRESQAYYQRGASVILFSPPPVILLISFLIFLIVG.

Positions 1 to 24 (MVKSHIGSWILVLFVAMWSDVGLC) are cleaved as a signal peptide. Residues 25 to 233 (KKRPKPGGGW…ESQAYYQRGA (209 aa)) are interaction with GRB2, ERI3 and SYN1. The interval 28–110 (PKPGGGWNTG…QWNKPSKPKT (83 aa)) is disordered. Repeat copies occupy residues 54 to 62 (PQGGGGWGQ), 63 to 70 (PHGGGWGQ), 71 to 78 (PHGGGWGQ), 79 to 86 (PHGGGWGQ), and 87 to 95 (PHGGGGWGQ). The segment at 54–95 (PQGGGGWGQPHGGGWGQPHGGGWGQPHGGGWGQPHGGGGWGQ) is 5 X 8 AA tandem repeats of P-H-G-G-G-W-G-Q. A compositionally biased stretch (gly residues) spans 55-97 (QGGGGWGQPHGGGWGQPHGGGWGQPHGGGWGQPHGGGGWGQGG). Residues histidine 64, glycine 65, glycine 66, histidine 72, glycine 73, glycine 74, histidine 80, glycine 81, glycine 82, histidine 88, glycine 90, and glycine 91 each coordinate Cu(2+). Residues cysteine 182 and cysteine 217 are joined by a disulfide bond. Residues asparagine 184 and asparagine 200 are each glycosylated (N-linked (GlcNAc...) asparagine). A lipid anchor (GPI-anchor amidated alanine) is attached at alanine 233. Positions 234 to 256 (SVILFSPPPVILLISFLIFLIVG) are cleaved as a propeptide — removed in mature form.

It belongs to the prion family. As to quaternary structure, monomer and homodimer. Has a tendency to aggregate into amyloid fibrils containing a cross-beta spine, formed by a steric zipper of superposed beta-strands. Soluble oligomers may represent an intermediate stage on the path to fibril formation. Copper binding may promote oligomerization. Interacts with GRB2, APP, ERI3/PRNPIP and SYN1. Mislocalized cytosolically exposed PrP interacts with MGRN1; this interaction alters MGRN1 subcellular location and causes lysosomal enlargement. Interacts with KIAA1191.

The protein localises to the cell membrane. Its subcellular location is the golgi apparatus. Functionally, its primary physiological function is unclear. Has cytoprotective activity against internal or environmental stresses. May play a role in neuronal development and synaptic plasticity. May be required for neuronal myelin sheath maintenance. May play a role in iron uptake and iron homeostasis. Soluble oligomers are toxic to cultured neuroblastoma cells and induce apoptosis (in vitro). Association with GPC1 (via its heparan sulfate chains) targets PRNP to lipid rafts. Also provides Cu(2+) or Zn(2+) for the ascorbate-mediated GPC1 deaminase degradation of its heparan sulfate side chains. The sequence is that of Major prion protein (PRNP) from Capra hircus (Goat).